We begin with the raw amino-acid sequence, 417 residues long: Gamma-glutamyl phosphate reductase (417 aa).

The protein belongs to the gamma-glutamyl phosphate reductase family.

The protein resides in the cytoplasm. It carries out the reaction L-glutamate 5-semialdehyde + phosphate + NADP(+) = L-glutamyl 5-phosphate + NADPH + H(+). Its pathway is amino-acid biosynthesis; L-proline biosynthesis; L-glutamate 5-semialdehyde from L-glutamate: step 2/2. Its function is as follows. Catalyzes the NADPH-dependent reduction of L-glutamate 5-phosphate into L-glutamate 5-semialdehyde and phosphate. The product spontaneously undergoes cyclization to form 1-pyrroline-5-carboxylate. This is Gamma-glutamyl phosphate reductase from Meiothermus ruber.